A 506-amino-acid polypeptide reads, in one-letter code: Maturase K (506 aa).

Belongs to the intron maturase 2 family. MatK subfamily.

It is found in the plastid. The protein localises to the chloroplast. In terms of biological role, usually encoded in the trnK tRNA gene intron. Probably assists in splicing its own and other chloroplast group II introns. The sequence is that of Maturase K from Cytisus scoparius (Scotch broom).